The chain runs to 321 residues: Biotin synthase (321 aa).

Residues 45-271 (FFGKKVKLNM…INPSKEIRIA (227 aa)) enclose the Radical SAM core domain. 3 residues coordinate [4Fe-4S] cluster: Cys-63, Cys-67, and Cys-70. Positions 106, 139, 199, and 269 each coordinate [2Fe-2S] cluster.

The protein belongs to the radical SAM superfamily. Biotin synthase family. In terms of assembly, homodimer. The cofactor is [4Fe-4S] cluster. [2Fe-2S] cluster is required as a cofactor.

It carries out the reaction (4R,5S)-dethiobiotin + (sulfur carrier)-SH + 2 reduced [2Fe-2S]-[ferredoxin] + 2 S-adenosyl-L-methionine = (sulfur carrier)-H + biotin + 2 5'-deoxyadenosine + 2 L-methionine + 2 oxidized [2Fe-2S]-[ferredoxin]. Its pathway is cofactor biosynthesis; biotin biosynthesis; biotin from 7,8-diaminononanoate: step 2/2. Functionally, catalyzes the conversion of dethiobiotin (DTB) to biotin by the insertion of a sulfur atom into dethiobiotin via a radical-based mechanism. In Staphylococcus haemolyticus (strain JCSC1435), this protein is Biotin synthase.